The primary structure comprises 439 residues: tRNA modification GTPase MnmE (439 aa).

The (6S)-5-formyl-5,6,7,8-tetrahydrofolate site is built by Arg24, Glu81, and Lys121. One can recognise a TrmE-type G domain in the interval 218-363 (GFKVVIAGAP…LRRLIGDIVE (146 aa)). Residue Asn228 coordinates K(+). GTP is bound by residues 228 to 233 (NAGKSS), 247 to 253 (TEIAGTT), and 272 to 275 (DTAG). Ser232 serves as a coordination point for Mg(2+). Residues Thr247, Ile249, and Thr252 each coordinate K(+). Thr253 contacts Mg(2+). A (6S)-5-formyl-5,6,7,8-tetrahydrofolate-binding site is contributed by Lys439.

Belongs to the TRAFAC class TrmE-Era-EngA-EngB-Septin-like GTPase superfamily. TrmE GTPase family. In terms of assembly, homodimer. Heterotetramer of two MnmE and two MnmG subunits. K(+) is required as a cofactor.

It localises to the cytoplasm. In terms of biological role, exhibits a very high intrinsic GTPase hydrolysis rate. Involved in the addition of a carboxymethylaminomethyl (cmnm) group at the wobble position (U34) of certain tRNAs, forming tRNA-cmnm(5)s(2)U34. This is tRNA modification GTPase MnmE from Rhizobium johnstonii (strain DSM 114642 / LMG 32736 / 3841) (Rhizobium leguminosarum bv. viciae).